Here is a 295-residue protein sequence, read N- to C-terminus: Pyridoxal 5'-phosphate synthase subunit PdxS (295 aa).

A D-ribose 5-phosphate-binding site is contributed by Asp-25. Lys-82 acts as the Schiff-base intermediate with D-ribose 5-phosphate in catalysis. Gly-154 contributes to the D-ribose 5-phosphate binding site. Arg-166 contributes to the D-glyceraldehyde 3-phosphate binding site. Residues Gly-215 and Gly-236–Ser-237 contribute to the D-ribose 5-phosphate site.

This sequence belongs to the PdxS/SNZ family. As to quaternary structure, in the presence of PdxT, forms a dodecamer of heterodimers.

The catalysed reaction is aldehydo-D-ribose 5-phosphate + D-glyceraldehyde 3-phosphate + L-glutamine = pyridoxal 5'-phosphate + L-glutamate + phosphate + 3 H2O + H(+). Its pathway is cofactor biosynthesis; pyridoxal 5'-phosphate biosynthesis. Functionally, catalyzes the formation of pyridoxal 5'-phosphate from ribose 5-phosphate (RBP), glyceraldehyde 3-phosphate (G3P) and ammonia. The ammonia is provided by the PdxT subunit. Can also use ribulose 5-phosphate and dihydroxyacetone phosphate as substrates, resulting from enzyme-catalyzed isomerization of RBP and G3P, respectively. The polypeptide is Pyridoxal 5'-phosphate synthase subunit PdxS (Bacillus cereus (strain Q1)).